We begin with the raw amino-acid sequence, 285 residues long: Probable endonuclease 4 (285 aa).

Histidine 69, histidine 109, glutamate 145, aspartate 179, histidine 182, histidine 216, aspartate 229, histidine 231, and glutamate 261 together coordinate Zn(2+).

The protein belongs to the AP endonuclease 2 family. Requires Zn(2+) as cofactor.

It carries out the reaction Endonucleolytic cleavage to 5'-phosphooligonucleotide end-products.. Its function is as follows. Endonuclease IV plays a role in DNA repair. It cleaves phosphodiester bonds at apurinic or apyrimidinic (AP) sites, generating a 3'-hydroxyl group and a 5'-terminal sugar phosphate. The chain is Probable endonuclease 4 from Cronobacter sakazakii (strain ATCC BAA-894) (Enterobacter sakazakii).